A 427-amino-acid chain; its full sequence is Gamma-glutamyl phosphate reductase (427 aa).

It belongs to the gamma-glutamyl phosphate reductase family.

It localises to the cytoplasm. It catalyses the reaction L-glutamate 5-semialdehyde + phosphate + NADP(+) = L-glutamyl 5-phosphate + NADPH + H(+). It functions in the pathway amino-acid biosynthesis; L-proline biosynthesis; L-glutamate 5-semialdehyde from L-glutamate: step 2/2. Its function is as follows. Catalyzes the NADPH-dependent reduction of L-glutamate 5-phosphate into L-glutamate 5-semialdehyde and phosphate. The product spontaneously undergoes cyclization to form 1-pyrroline-5-carboxylate. The polypeptide is Gamma-glutamyl phosphate reductase (Rhizobium rhizogenes (strain K84 / ATCC BAA-868) (Agrobacterium radiobacter)).